Here is a 496-residue protein sequence, read N- to C-terminus: Splicing factor U2AF 65 kDa subunit (496 aa).

The span at 1–26 (MSDHQDGMKLEDIERQFLDVAQREGG) shows a compositional bias: basic and acidic residues. The segment at 1–142 (MSDHQDGMKL…PKKYRFWDVP (142 aa)) is disordered. Basic residues predominate over residues 59–77 (KKRKRSRSRDRDTRRRSRS). Composition is skewed to basic and acidic residues over residues 78-96 (RDRG…DRSR) and 105-138 (GGRD…KYRF). RRM domains are found at residues 184–266 (RRLY…RPRD), 291–368 (NKIF…LACA), and 404–488 (NMVT…YYDV).

In terms of assembly, forms a heterodimer with the U2AF small subunit.

The protein resides in the nucleus. Necessary for the splicing of pre-mRNA. Binds to the polypyrimidine tract of introns early during spliceosome assembly. In Caenorhabditis elegans, this protein is Splicing factor U2AF 65 kDa subunit (uaf-1).